We begin with the raw amino-acid sequence, 214 residues long: Protein transport protein SEC22 (214 aa).

Over 1 to 192 the chain is Cytoplasmic; it reads MIKSTLIFRD…QKINFDLLLS (192 aa). Residues 6–117 enclose the Longin domain; that stretch reads LIFRDDGLPL…YAFVSFDNFL (112 aa). The v-SNARE coiled-coil homology domain maps to 132–192; sequence NLDQLNSDLL…QKINFDLLLS (61 aa). A helical; Anchor for type IV membrane protein membrane pass occupies residues 193–213; sequence QYAPVALIGLFFLFLVWWLVF. Position 214 (arginine 214) is a topological domain, vesicular.

It belongs to the synaptobrevin family.

It is found in the membrane. The protein resides in the endoplasmic reticulum membrane. It localises to the golgi apparatus membrane. Functionally, required for transport from the ER to the Golgi complex. The sequence is that of Protein transport protein SEC22 (SEC22) from Eremothecium gossypii (strain ATCC 10895 / CBS 109.51 / FGSC 9923 / NRRL Y-1056) (Yeast).